The following is a 198-amino-acid chain: Beta-crystallin A1-1 (198 aa).

The N-terminal arm stretch occupies residues 1–13 (MAQINPLPVPLGP). 2 Beta/gamma crystallin 'Greek key' domains span residues 14–53 (WKITVYDQENFQGKRMEFTSSCTNIMECGFDNIRSLKVEC) and 54–100 (GAWI…RPIC). Residues 101-106 (SANHKE) form a connecting peptide region. 2 Beta/gamma crystallin 'Greek key' domains span residues 107–148 (SKLV…KVQC) and 149–197 (GAWV…RRIQ).

The protein belongs to the beta/gamma-crystallin family. Homo/heterodimer, or complexes of higher-order. The structure of beta-crystallin oligomers seems to be stabilized through interactions between the N-terminal arms. In terms of processing, the N-terminus is blocked.

Crystallins are the dominant structural components of the vertebrate eye lens. This is Beta-crystallin A1-1 from Aquarana catesbeiana (American bullfrog).